Here is a 413-residue protein sequence, read N- to C-terminus: Multifunctional CCA protein (413 aa).

Glycine 8 and arginine 11 together coordinate ATP. CTP-binding residues include glycine 8 and arginine 11. The Mg(2+) site is built by aspartate 21 and aspartate 23. 3 residues coordinate ATP: arginine 91, arginine 137, and arginine 140. Residues arginine 91, arginine 137, and arginine 140 each coordinate CTP. The region spanning 228-329 (TGVHTLMTLS…VKLFDAIDAW (102 aa)) is the HD domain.

The protein belongs to the tRNA nucleotidyltransferase/poly(A) polymerase family. Bacterial CCA-adding enzyme type 1 subfamily. Monomer. Can also form homodimers and oligomers. It depends on Mg(2+) as a cofactor. The cofactor is Ni(2+).

The catalysed reaction is a tRNA precursor + 2 CTP + ATP = a tRNA with a 3' CCA end + 3 diphosphate. It carries out the reaction a tRNA with a 3' CCA end + 2 CTP + ATP = a tRNA with a 3' CCACCA end + 3 diphosphate. Functionally, catalyzes the addition and repair of the essential 3'-terminal CCA sequence in tRNAs without using a nucleic acid template. Adds these three nucleotides in the order of C, C, and A to the tRNA nucleotide-73, using CTP and ATP as substrates and producing inorganic pyrophosphate. tRNA 3'-terminal CCA addition is required both for tRNA processing and repair. Also involved in tRNA surveillance by mediating tandem CCA addition to generate a CCACCA at the 3' terminus of unstable tRNAs. While stable tRNAs receive only 3'-terminal CCA, unstable tRNAs are marked with CCACCA and rapidly degraded. The chain is Multifunctional CCA protein from Salmonella schwarzengrund (strain CVM19633).